The sequence spans 132 residues: Ribosome-binding factor A (132 aa).

The protein belongs to the RbfA family. Monomer. Binds 30S ribosomal subunits, but not 50S ribosomal subunits or 70S ribosomes.

It is found in the cytoplasm. One of several proteins that assist in the late maturation steps of the functional core of the 30S ribosomal subunit. Associates with free 30S ribosomal subunits (but not with 30S subunits that are part of 70S ribosomes or polysomes). Required for efficient processing of 16S rRNA. May interact with the 5'-terminal helix region of 16S rRNA. This Pseudomonas entomophila (strain L48) protein is Ribosome-binding factor A.